Here is a 217-residue protein sequence, read N- to C-terminus: Ras-related protein Rab-19 (217 aa).

GTP is bound by residues serine 26, valine 28, glycine 29, lysine 30, threonine 31, cysteine 32, tyrosine 42, glutamate 44, and threonine 49. Residue threonine 31 participates in Mg(2+) binding. The Switch 1 motif lies at serine 39–phenylalanine 54. 2 residues coordinate Mg(2+): threonine 49 and aspartate 72. A Switch 2 motif is present at residues alanine 74 to serine 89. Residues glycine 75, asparagine 130, lysine 131, aspartate 133, serine 161, alanine 162, and lysine 163 each coordinate GTP. Residues cysteine 215 and cysteine 217 are each lipidated (S-geranylgeranyl cysteine). Cysteine methyl ester is present on cysteine 217.

It belongs to the small GTPase superfamily. Rab family. The cofactor is Mg(2+).

Its subcellular location is the cell membrane. It carries out the reaction GTP + H2O = GDP + phosphate + H(+). Regulated by guanine nucleotide exchange factors (GEFs) which promote the exchange of bound GDP for free GTP. Regulated by GTPase activating proteins (GAPs) which increase the GTP hydrolysis activity. Inhibited by GDP dissociation inhibitors (GDIs). The small GTPases Rab are key regulators of intracellular membrane trafficking, from the formation of transport vesicles to their fusion with membranes. Rabs cycle between an inactive GDP-bound form and an active GTP-bound form that is able to recruit to membranes different set of downstream effectors directly responsible for vesicle formation, movement, tethering and fusion. The sequence is that of Ras-related protein Rab-19 (RAB19) from Bos taurus (Bovine).